A 929-amino-acid chain; its full sequence is Ribonucleoside-diphosphate reductase large chain (929 aa).

Residues 1 to 92 enclose the ATP-cone domain; that stretch reads MYVKKRDGRQ…VSNLHKQTKK (92 aa). ATP contacts are provided by residues 5–6, 11–17, Thr-53, and Asp-57; these read KR and ERVQFDK. Residues Ser-202 and Ser-217 each contribute to the GDP site. An intrachain disulfide couples Cys-218 to Cys-444. Residues 226-228, Lys-243, Arg-256, and 263-264 each bind dTTP; these read DSI and AG. Residue Asn-427 coordinates GDP. The Proton acceptor role is filled by Asn-427. Cys-429 serves as the catalytic Cysteine radical intermediate. GDP is bound by residues Glu-431 and 605-608; that span reads TAST. Glu-431 acts as the Proton acceptor in catalysis. The segment at 789 to 904 is disordered; sequence ENTSGPRPYA…RDENIYSNAP (116 aa). Positions 800–809 are enriched in polar residues; that stretch reads TGVSGTSTPI. The segment covering 868 to 884 has biased composition (basic and acidic residues); that stretch reads VKTEDIGSPLLERKEGQ. Over residues 885-894 the composition is skewed to acidic residues; the sequence is NEDVDEDSQE.

The protein belongs to the ribonucleoside diphosphate reductase large chain family.

It carries out the reaction a 2'-deoxyribonucleoside 5'-diphosphate + [thioredoxin]-disulfide + H2O = a ribonucleoside 5'-diphosphate + [thioredoxin]-dithiol. Its activity is regulated as follows. Under complex allosteric control mediated by deoxynucleoside triphosphates and ATP binding to separate specificity and activation sites on the large subunit. The type of nucleotide bound at the specificity site determines substrate preference. It seems probable that ATP makes the enzyme reduce CDP and UDP, dGTP favors ADP reduction and dTTP favors GDP reduction. Stimulated by ATP and inhibited by dATP binding to the activity site. In terms of biological role, provides the precursors necessary for DNA synthesis. Catalyzes the biosynthesis of deoxyribonucleotides from the corresponding ribonucleotides. This is Ribonucleoside-diphosphate reductase large chain (rnr-1) from Neurospora crassa (strain ATCC 24698 / 74-OR23-1A / CBS 708.71 / DSM 1257 / FGSC 987).